Consider the following 622-residue polypeptide: Low affinity potassium transport system protein Kup (622 aa).

Helical transmembrane passes span 9 to 29 (LSAV…TSPL), 46 to 66 (PDVV…VVSV), 101 to 121 (ILVV…VITP), 137 to 157 (PALD…LFVI), 165 to 185 (VGKL…LLGL), 213 to 233 (VSFF…ALYA), 247 to 267 (WFTV…ALLL), 276 to 296 (PFFL…ATLA), 337 to 357 (IYIP…IIGF), 363 to 383 (LAAA…ILFC), 395 to 415 (FLVA…FSAN), and 416 to 436 (VLKL…MFII).

Belongs to the HAK/KUP transporter (TC 2.A.72) family.

It is found in the cell inner membrane. It carries out the reaction K(+)(in) + H(+)(in) = K(+)(out) + H(+)(out). In terms of biological role, responsible for the low-affinity transport of potassium into the cell. Likely operates as a K(+):H(+) symporter. In Yersinia pseudotuberculosis serotype O:1b (strain IP 31758), this protein is Low affinity potassium transport system protein Kup.